A 139-amino-acid polypeptide reads, in one-letter code: Putative pre-16S rRNA nuclease (139 aa).

The protein belongs to the YqgF nuclease family.

Its subcellular location is the cytoplasm. In terms of biological role, could be a nuclease involved in processing of the 5'-end of pre-16S rRNA. This chain is Putative pre-16S rRNA nuclease, found in Streptococcus uberis (strain ATCC BAA-854 / 0140J).